The sequence spans 200 residues: Phospholipase A2 inhibitor CgMIP-I (200 aa).

Positions 1–19 are cleaved as a signal peptide; that stretch reads MKYLHTICLLFIFVARGNS. Disulfide bonds link Cys22–Cys46, Cys25–Cys32, Cys39–Cys67, Cys73–Cys94, Cys95–Cys100, Cys118–Cys143, and Cys136–Cys165. Asn176 carries an N-linked (GlcNAc...) asparagine glycan.

Belongs to the CNF-like-inhibitor family. As to quaternary structure, homomer of 110 kDa composed of 20-25-kDa subunits. N-glycosylated. The glycosidic chain may contain superficial sialic acid residues. Expressed by the liver.

The protein resides in the secreted. Its function is as follows. Inhibits the enzymatic activity of basic phospholipase A2. Specifically neutralizes PLA2, myotoxic, edema-forming, cytolytic, and anti-coagulant activities, as well as intracerebral lethal effect of the basic myotoxin I from the same venom (AC P0DQP6), crotoxin heterodimer and crotoxin subunit B alone. Does not block the enzymatic activity of crude acidic PLA2 fractions from the same venom. This chain is Phospholipase A2 inhibitor CgMIP-I, found in Cerrophidion godmani (Porthidium godmani).